A 91-amino-acid polypeptide reads, in one-letter code: Putative regulatory protein Helmi_20580 (91 aa).

This sequence belongs to the RemA family.

The chain is Putative regulatory protein Helmi_20580 from Heliobacterium modesticaldum (strain ATCC 51547 / Ice1).